The following is a 173-amino-acid chain: Lens fiber membrane intrinsic protein (173 aa).

Topologically, residues 1 to 3 are cytoplasmic; that stretch reads MYS. Residues 4-24 traverse the membrane as a helical segment; the sequence is FMGGGLFCAWVGTILLVVATA. Topologically, residues 25 to 66 are extracellular; sequence TDHWMQYRLSGAFAHQGLWRYCLGTKCYLQTESIAYWNATRA. 2 C-linked (Man) tryptophan; partial glycosylation sites follow: W43 and W61. A helical transmembrane segment spans residues 67-87; the sequence is FMILSSLCATSGIIMGIVAFA. The Cytoplasmic portion of the chain corresponds to 88 to 98; the sequence is QQPTFTRLSRP. A helical membrane pass occupies residues 99–119; that stretch reads FSAGIMFFASTFFVLLALAIY. Residues 120 to 140 lie on the Extracellular side of the membrane; it reads TGVTVSFLGRRFGDWRFSWSY. A helical transmembrane segment spans residues 141–161; the sequence is ILGWVALLMTFFAGIFYMCAY. Residues 162-173 lie on the Cytoplasmic side of the membrane; sequence RMHECRRLSTPR. A Phosphoserine modification is found at S170. T171 carries the phosphothreonine modification.

This sequence belongs to the PMP-22/EMP/MP20 family. Seems to be associated with itself or another lens membrane component via disulfide bonds. Predominantly monophosphorylated on Ser-170. Only about 15% diphosphorylated on both Ser-170 and Thr-171. In terms of processing, C-glycosylated. Trp-43 is more extensively C-glycosylated than Trp-61. C-glycosylation may be involved in membrane trafficking. As to expression, eye lens specific.

The protein localises to the membrane. In terms of biological role, present in the thicker 16-17 nm junctions of mammalian lens fiber cells, where it may contribute to cell junctional organization. Acts as a receptor for calmodulin. May play an important role in both lens development and cataractogenesis. This chain is Lens fiber membrane intrinsic protein (LIM2), found in Bos taurus (Bovine).